Consider the following 420-residue polypeptide: Gamma-glutamyl phosphate reductase (420 aa).

It belongs to the gamma-glutamyl phosphate reductase family.

It localises to the cytoplasm. The enzyme catalyses L-glutamate 5-semialdehyde + phosphate + NADP(+) = L-glutamyl 5-phosphate + NADPH + H(+). It functions in the pathway amino-acid biosynthesis; L-proline biosynthesis; L-glutamate 5-semialdehyde from L-glutamate: step 2/2. In terms of biological role, catalyzes the NADPH-dependent reduction of L-glutamate 5-phosphate into L-glutamate 5-semialdehyde and phosphate. The product spontaneously undergoes cyclization to form 1-pyrroline-5-carboxylate. The polypeptide is Gamma-glutamyl phosphate reductase (Cereibacter sphaeroides (strain ATCC 17029 / ATH 2.4.9) (Rhodobacter sphaeroides)).